The following is a 142-amino-acid chain: Small ribosomal subunit protein uS12y (142 aa).

Hydroxyproline is present on Pro61.

This sequence belongs to the universal ribosomal protein uS12 family.

The chain is Small ribosomal subunit protein uS12y (RPS23B) from Arabidopsis thaliana (Mouse-ear cress).